We begin with the raw amino-acid sequence, 279 residues long: DegV domain-containing protein CPE1310 (279 aa).

The DegV domain maps to 4-277 (IKIITDSTCD…PKVCALFYVE (274 aa)). Residues Thr62 and Ser94 each coordinate hexadecanoate.

Functionally, may bind long-chain fatty acids, such as palmitate, and may play a role in lipid transport or fatty acid metabolism. The protein is DegV domain-containing protein CPE1310 of Clostridium perfringens (strain 13 / Type A).